A 168-amino-acid chain; its full sequence is Phosphopantetheine adenylyltransferase (168 aa).

Threonine 17 provides a ligand contact to substrate. Residues 17-18 and histidine 25 contribute to the ATP site; that span reads TF. Residues lysine 49, leucine 81, and arginine 95 each contribute to the substrate site. ATP is bound by residues 96–98, glutamate 106, and 131–137; these read GLR and LMYISST.

Belongs to the bacterial CoaD family. As to quaternary structure, homohexamer. Mg(2+) is required as a cofactor.

The protein resides in the cytoplasm. The enzyme catalyses (R)-4'-phosphopantetheine + ATP + H(+) = 3'-dephospho-CoA + diphosphate. Its pathway is cofactor biosynthesis; coenzyme A biosynthesis; CoA from (R)-pantothenate: step 4/5. In terms of biological role, reversibly transfers an adenylyl group from ATP to 4'-phosphopantetheine, yielding dephospho-CoA (dPCoA) and pyrophosphate. In Legionella pneumophila (strain Paris), this protein is Phosphopantetheine adenylyltransferase.